The primary structure comprises 470 residues: Ubiquitin carboxyl-terminal hydrolase calypso (470 aa).

A UCH catalytic domain is found at 43–274; it reads GWLELESDPG…IRFNLMAVVP (232 aa). Residue cysteine 129 is the Nucleophile of the active site. Histidine 211 (proton donor) is an active-site residue. Positions 305 to 324 are disordered; it reads DEQGEGGNGDPQRPDTPSTL. The region spanning 373–401 is the ULD domain; that stretch reads NYDKFICTFLSMLAHQGVLGELVSQHLLP. Residues 403 to 470 are positively charged C-terminal tail required for binding nucleosomes; sequence KKISGQSAAN…KGRNKCKKRK (68 aa). Over residues 422–451 the composition is skewed to low complexity; sequence ANAGATAAGAAGAAPKSQQQQAAAAKNGKS. The disordered stretch occupies residues 422-470; sequence ANAGATAAGAAGAAPKSQQQQAAAAKNGKSPSKTPGRRRKGRNKCKKRK. The span at 456-470 shows a compositional bias: basic residues; that stretch reads PGRRRKGRNKCKKRK.

It belongs to the peptidase C12 family. BAP1 subfamily. As to quaternary structure, catalytic component of the polycomb repressive deubiquitinase (PR-DUB) complex, at least composed of caly/calypso, Asx and sba (MBD5/6 homolog). The PR-DUB complex associates with nucleosomes to mediate deubiquitination of histone H2AK118ub1 substrates; the association requires the positively charged C-terminal tail of caly, probably due to direct binding of DNA. Interacts (via ULD domain) with Asx (via DEUBAD domain); the interaction produces a stable heterodimer with a composite binding site for ubiquitin. Homodimerizes (via coiled-coil hinge-region between the UCH and ULD domains) to mediate assembly of 2 copies of the caly-Asx heterodimer into a bisymmetric tetramer; dimerization enhances PR-DUB association with nucleosomes.

It is found in the nucleus. It carries out the reaction Thiol-dependent hydrolysis of ester, thioester, amide, peptide and isopeptide bonds formed by the C-terminal Gly of ubiquitin (a 76-residue protein attached to proteins as an intracellular targeting signal).. In terms of biological role, catalytic component of the polycomb repressive deubiquitinase (PR-DUB) complex, a complex that specifically mediates deubiquitination of histone H2A monoubiquitinated at 'Lys-119' (H2AK118ub1). Mediates bisymmetric organization of the PR-DUB complex and is involved in association with nucleosomes to mediate deubiquitination. Does not deubiquitinate monoubiquitinated histone H2B. Required to maintain the transcriptionally repressive state of homeotic genes throughout development. The PR-DUB complex has weak or no activity toward 'Lys-48'- and 'Lys-63'-linked polyubiquitin chains. Polycomb group (PcG) protein. The sequence is that of Ubiquitin carboxyl-terminal hydrolase calypso from Drosophila ananassae (Fruit fly).